A 321-amino-acid chain; its full sequence is Lipoyl synthase (321 aa).

Positions 68, 73, 79, 94, 98, 101, and 308 each coordinate [4Fe-4S] cluster. Residues 80–297 (FNHGTATFMI…KAEALAMGFT (218 aa)) form the Radical SAM core domain.

Belongs to the radical SAM superfamily. Lipoyl synthase family. It depends on [4Fe-4S] cluster as a cofactor.

The protein resides in the cytoplasm. It catalyses the reaction [[Fe-S] cluster scaffold protein carrying a second [4Fe-4S](2+) cluster] + N(6)-octanoyl-L-lysyl-[protein] + 2 oxidized [2Fe-2S]-[ferredoxin] + 2 S-adenosyl-L-methionine + 4 H(+) = [[Fe-S] cluster scaffold protein] + N(6)-[(R)-dihydrolipoyl]-L-lysyl-[protein] + 4 Fe(3+) + 2 hydrogen sulfide + 2 5'-deoxyadenosine + 2 L-methionine + 2 reduced [2Fe-2S]-[ferredoxin]. Its pathway is protein modification; protein lipoylation via endogenous pathway; protein N(6)-(lipoyl)lysine from octanoyl-[acyl-carrier-protein]: step 2/2. In terms of biological role, catalyzes the radical-mediated insertion of two sulfur atoms into the C-6 and C-8 positions of the octanoyl moiety bound to the lipoyl domains of lipoate-dependent enzymes, thereby converting the octanoylated domains into lipoylated derivatives. This Escherichia coli O9:H4 (strain HS) protein is Lipoyl synthase.